A 179-amino-acid chain; its full sequence is Natural killer cells antigen CD94 (179 aa).

Residues 1-10 are Cytoplasmic-facing; the sequence is MAVFKTTLWR. A helical; Signal-anchor for type II membrane protein membrane pass occupies residues 11 to 31; sequence LISGTLGIICLSLMSTLGILL. Topologically, residues 32–179 are extracellular; that stretch reads KNSFTKLSIE…NRYICKQQLI (148 aa). 2 cysteine pairs are disulfide-bonded: Cys58–Cys70 and Cys61–Cys72. The region spanning 68 to 175 is the C-type lectin domain; sequence YRCNCYFISS…CEDKNRYICK (108 aa). 2 N-linked (GlcNAc...) asparagine glycosylation sites follow: Asn83 and Asn132. 2 disulfide bridges follow: Cys89–Cys174 and Cys152–Cys166.

In terms of assembly, can form disulfide-bonded heterodimer with NKG2 family members KLRC1 and KLRC2. KLRD1-KLRC1 heterodimer interacts with peptide-bound HLA-E-B2M heterotrimeric complex. KLRD1 plays a prominent role in directly interacting with HLA-E. KLRD1-KLRC1 interacts with much higher affinity with peptide-bound HLA-E-B2M than KLRD1-KLRC2. Interacts with the adapter protein TYROBP/DAP12; this interaction is required for cell surface expression and cell activation. Expressed in NK cell subsets (at protein level). Expressed in memory/effector CD8-positive alpha-beta T cell subsets (at protein level). Expressed in melanoma-specific cytotoxic T cell clones (at protein level). Expressed in terminally differentiated cytotoxic gamma-delta T cells (at protein level). KLRD1-KLRC1 and KLRD1-KLRC2 are differentially expressed in NK and T cell populations, with only minor subsets expressing both receptor complexes (at protein level).

The protein resides in the cell membrane. Its function is as follows. Immune receptor involved in self-nonself discrimination. In complex with KLRC1 or KLRC2 on cytotoxic and regulatory lymphocyte subsets, recognizes non-classical major histocompatibility (MHC) class Ib molecule HLA-E loaded with self-peptides derived from the signal sequence of classical MHC class Ia and non-classical MHC class Ib molecules. Enables cytotoxic cells to monitor the expression of MHC class I molecules in healthy cells and to tolerate self. Primarily functions as a ligand binding subunit as it lacks the capacity to signal. KLRD1-KLRC1 acts as an immune inhibitory receptor. Key inhibitory receptor on natural killer (NK) cells that regulates their activation and effector functions. Dominantly counteracts T cell receptor signaling on a subset of memory/effector CD8-positive T cells as part of an antigen-driven response to avoid autoimmunity. On intraepithelial CD8-positive gamma-delta regulatory T cells triggers TGFB1 secretion, which in turn limits the cytotoxic programming of intraepithelial CD8-positive alpha-beta T cells, distinguishing harmless from pathogenic antigens. In HLA-E-rich tumor microenvironment, acts as an immune inhibitory checkpoint and may contribute to progressive loss of effector functions of NK cells and tumor-specific T cells, a state known as cell exhaustion. Upon HLA-E-peptide binding, transmits intracellular signals through KLRC1 immunoreceptor tyrosine-based inhibition motifs (ITIMs) by recruiting INPP5D/SHIP-1 and INPPL1/SHIP-2 tyrosine phosphatases to ITIMs, and ultimately opposing signals transmitted by activating receptors through dephosphorylation of proximal signaling molecules. In terms of biological role, KLRD1-KLRC2 acts as an immune activating receptor. On cytotoxic lymphocyte subsets recognizes HLA-E loaded with signal sequence-derived peptides from non-classical MHC class Ib HLA-G molecules, likely playing a role in the generation and effector functions of adaptive NK cells and in maternal-fetal tolerance during pregnancy. Regulates the effector functions of terminally differentiated cytotoxic lymphocyte subsets, and in particular may play a role in adaptive NK cell response to viral infection. Upon HLA-E-peptide binding, transmits intracellular signals via the adapter protein TYROBP/DAP12, triggering the phosphorylation of proximal signaling molecules and cell activation. Functionally, (Microbial infection) Viruses like human cytomegalovirus have evolved an escape mechanism whereby virus-induced down-regulation of host MHC class I molecules is coupled to the binding of viral peptides to HLA-E, restoring HLA-E expression and inducing HLA-E-dependent NK cell immune tolerance to infected cells. Recognizes HLA-E in complex with human cytomegalovirus UL40-derived peptide (VMAPRTLIL) and inhibits NK cell cytotoxicity. Its function is as follows. (Microbial infection) May recognize HLA-E in complex with HIV-1 gag/Capsid protein p24-derived peptide (AISPRTLNA) on infected cells and may inhibit NK cell cytotoxicity, a mechanism that allows HIV-1 to escape immune recognition. (Microbial infection) Upon SARS-CoV-2 infection, may contribute to functional exhaustion of cytotoxic NK cells and CD8-positive T cells. On NK cells, may recognize HLA-E in complex with SARS-CoV-2 S/Spike protein S1-derived peptide (LQPRTFLL) expressed on the surface of lung epithelial cells, inducing NK cell exhaustion and dampening antiviral immune surveillance. This chain is Natural killer cells antigen CD94 (KLRD1), found in Homo sapiens (Human).